The chain runs to 415 residues: tRNA(Ile)-lysidine synthase (415 aa).

36 to 41 (SGGRDS) is a binding site for ATP.

It belongs to the tRNA(Ile)-lysidine synthase family.

It is found in the cytoplasm. It carries out the reaction cytidine(34) in tRNA(Ile2) + L-lysine + ATP = lysidine(34) in tRNA(Ile2) + AMP + diphosphate + H(+). Its function is as follows. Ligates lysine onto the cytidine present at position 34 of the AUA codon-specific tRNA(Ile) that contains the anticodon CAU, in an ATP-dependent manner. Cytidine is converted to lysidine, thus changing the amino acid specificity of the tRNA from methionine to isoleucine. This Tropheryma whipplei (strain Twist) (Whipple's bacillus) protein is tRNA(Ile)-lysidine synthase.